Reading from the N-terminus, the 187-residue chain is NADH-quinone oxidoreductase subunit B (187 aa).

[4Fe-4S] cluster contacts are provided by Cys-66, Cys-67, Cys-131, and Cys-161.

It belongs to the complex I 20 kDa subunit family. In terms of assembly, NDH-1 is composed of 14 different subunits. Subunits NuoB, C, D, E, F, and G constitute the peripheral sector of the complex. [4Fe-4S] cluster serves as cofactor.

It localises to the cell inner membrane. The catalysed reaction is a quinone + NADH + 5 H(+)(in) = a quinol + NAD(+) + 4 H(+)(out). NDH-1 shuttles electrons from NADH, via FMN and iron-sulfur (Fe-S) centers, to quinones in the respiratory chain. The immediate electron acceptor for the enzyme in this species is believed to be ubiquinone. Couples the redox reaction to proton translocation (for every two electrons transferred, four hydrogen ions are translocated across the cytoplasmic membrane), and thus conserves the redox energy in a proton gradient. The protein is NADH-quinone oxidoreductase subunit B of Methylocella silvestris (strain DSM 15510 / CIP 108128 / LMG 27833 / NCIMB 13906 / BL2).